A 448-amino-acid polypeptide reads, in one-letter code: Adenylosuccinate synthetase (448 aa).

GTP-binding positions include 36–42 (GDEGKGK) and 64–66 (GHT). Residue Asp-37 is the Proton acceptor of the active site. The Mg(2+) site is built by Asp-37 and Gly-64. IMP-binding positions include 37-40 (DEGK), 62-65 (NAGH), Thr-154, Arg-168, Asn-246, Thr-261, and Arg-325. The active-site Proton donor is the His-65. 321–327 (VTTKRKR) is a substrate binding site. Residues Arg-327, 353 to 355 (KLD), and 436 to 438 (GVG) each bind GTP.

This sequence belongs to the adenylosuccinate synthetase family. In terms of assembly, homodimer. Mg(2+) serves as cofactor.

The protein resides in the cytoplasm. It carries out the reaction IMP + L-aspartate + GTP = N(6)-(1,2-dicarboxyethyl)-AMP + GDP + phosphate + 2 H(+). Its pathway is purine metabolism; AMP biosynthesis via de novo pathway; AMP from IMP: step 1/2. Its function is as follows. Plays an important role in the de novo pathway and in the salvage pathway of purine nucleotide biosynthesis. Catalyzes the first committed step in the biosynthesis of AMP from IMP. The chain is Adenylosuccinate synthetase from Drosophila ananassae (Fruit fly).